A 505-amino-acid polypeptide reads, in one-letter code: Aspartyl/glutamyl-tRNA(Asn/Gln) amidotransferase subunit B (505 aa).

The interval 220–241 (NVSLRPRPAPGDPDAPFGTRSE) is disordered.

Belongs to the GatB/GatE family. GatB subfamily. In terms of assembly, heterotrimer of A, B and C subunits.

It carries out the reaction L-glutamyl-tRNA(Gln) + L-glutamine + ATP + H2O = L-glutaminyl-tRNA(Gln) + L-glutamate + ADP + phosphate + H(+). The enzyme catalyses L-aspartyl-tRNA(Asn) + L-glutamine + ATP + H2O = L-asparaginyl-tRNA(Asn) + L-glutamate + ADP + phosphate + 2 H(+). In terms of biological role, allows the formation of correctly charged Asn-tRNA(Asn) or Gln-tRNA(Gln) through the transamidation of misacylated Asp-tRNA(Asn) or Glu-tRNA(Gln) in organisms which lack either or both of asparaginyl-tRNA or glutaminyl-tRNA synthetases. The reaction takes place in the presence of glutamine and ATP through an activated phospho-Asp-tRNA(Asn) or phospho-Glu-tRNA(Gln). The polypeptide is Aspartyl/glutamyl-tRNA(Asn/Gln) amidotransferase subunit B (Frankia casuarinae (strain DSM 45818 / CECT 9043 / HFP020203 / CcI3)).